The following is a 116-amino-acid chain: Iron-sulfur cluster insertion protein ErpA (116 aa).

The iron-sulfur cluster site is built by Cys-44, Cys-108, and Cys-110.

This sequence belongs to the HesB/IscA family. In terms of assembly, homodimer. Iron-sulfur cluster is required as a cofactor.

In terms of biological role, required for insertion of 4Fe-4S clusters for at least IspG. In Shewanella halifaxensis (strain HAW-EB4), this protein is Iron-sulfur cluster insertion protein ErpA.